Consider the following 151-residue polypeptide: Proteolipid protein 2 (151 aa).

In terms of domain architecture, MARVEL spans 19 to 137; sequence FSRTKKGILL…DAYITFPLKQ (119 aa). 4 helical membrane passes run 25 to 45, 48 to 68, 85 to 105, and 112 to 132; these read GILL…FSAS, AYSS…VFYM, FFRS…VLVE, and IVAG…AYIT.

The protein resides in the membrane. Functionally, may play a role in cell differentiation in the intestinal epithelium. The chain is Proteolipid protein 2 (Plp2) from Rattus norvegicus (Rat).